The sequence spans 257 residues: Homeobox protein goosecoid (257 aa).

The homeobox DNA-binding region spans 160 to 219; it reads KRRHRTIFTDEQLEALENLFQETKYPDVGTREQLARKVHLREEKVEVWFKNRRAKWRRQK. A disordered region spans residues 213-257; sequence AKWRRQKRSSSEESENAEKWNKTSSSKASPEKREEEGKSDLDSDS. The span at 241–257 shows a compositional bias: basic and acidic residues; that stretch reads SPEKREEEGKSDLDSDS.

This sequence belongs to the paired homeobox family. Bicoid subfamily.

It localises to the nucleus. Its function is as follows. Regulates chordin (CHRD). May play a role in spatial programing within discrete embryonic fields or lineage compartments during organogenesis. In concert with NKX3-2, plays a role in defining the structural components of the middle ear; required for the development of the entire tympanic ring. Probably involved in the regulatory networks that define neural crest cell fate specification and determine mesoderm cell lineages in mammals. This is Homeobox protein goosecoid (GSC) from Gorilla gorilla gorilla (Western lowland gorilla).